The following is a 351-amino-acid chain: Photosystem II D2 protein (351 aa).

A helical transmembrane segment spans residues 39–59 (CAFLALGGWLTGTTFVTSWYT). Chlorophyll a is bound at residue histidine 116. Residues 123–139 (GFMLRQFEIARLVGIRP) traverse the membrane as a helical segment. Pheophytin a is bound by residues glutamine 128 and asparagine 141. Residues 151–164 (VFVSVFLMYPLGQS) form a helical membrane-spanning segment. Chlorophyll a is bound at residue histidine 196. Residues 206 to 226 (GALLCAIHGATVENTLFEDGD) traverse the membrane as a helical segment. Residues histidine 213 and phenylalanine 260 each coordinate a plastoquinone. Histidine 213 lines the Fe cation pocket. A Fe cation-binding site is contributed by histidine 267. Residues 277–293 (GLWMSAVGIVGLALNLR) traverse the membrane as a helical segment.

The protein belongs to the reaction center PufL/M/PsbA/D family. In terms of assembly, PSII is composed of 1 copy each of membrane proteins PsbA, PsbB, PsbC, PsbD, PsbE, PsbF, PsbH, PsbI, PsbJ, PsbK, PsbL, PsbM, PsbT, PsbX, PsbY, PsbZ, Psb30/Ycf12, peripheral proteins PsbO, CyanoQ (PsbQ), PsbU, PsbV and a large number of cofactors. It forms dimeric complexes. It depends on The D1/D2 heterodimer binds P680, chlorophylls that are the primary electron donor of PSII, and subsequent electron acceptors. It shares a non-heme iron and each subunit binds pheophytin, quinone, additional chlorophylls, carotenoids and lipids. There is also a Cl(-1) ion associated with D1 and D2, which is required for oxygen evolution. The PSII complex binds additional chlorophylls, carotenoids and specific lipids. as a cofactor.

It localises to the cellular thylakoid membrane. It carries out the reaction 2 a plastoquinone + 4 hnu + 2 H2O = 2 a plastoquinol + O2. Its function is as follows. Photosystem II (PSII) is a light-driven water:plastoquinone oxidoreductase that uses light energy to abstract electrons from H(2)O, generating O(2) and a proton gradient subsequently used for ATP formation. It consists of a core antenna complex that captures photons, and an electron transfer chain that converts photonic excitation into a charge separation. The D1/D2 (PsbA/PsbD) reaction center heterodimer binds P680, the primary electron donor of PSII as well as several subsequent electron acceptors. D2 is needed for assembly of a stable PSII complex. The chain is Photosystem II D2 protein from Nostoc punctiforme (strain ATCC 29133 / PCC 73102).